The following is a 343-amino-acid chain: MQLLCWWQILLWVLGLPARGLEEDSGHTWQEERPVPALQVGSVYLNEEEAAQGHRVQARVAEPSEASLGPRGDPMVVLSVIPGAAEDQRSTEAHDGTCSAQGDEDPRCGGRENLFGLQGAGGFQDREEEYYAEPGVAEAEPVATEDANSTDSLKSPKVNCEERNVTGLENFTLKILNMSQDLMDFLNPNGSDCTLVLFYTPWCRFSASLAPHFNSLPRAFPTLGFLALDASQHSSLSTRFGTVAVPNILLFQGAKPMARFNHTDRTLETLKIFIFNQTGIEAKKNVVVTQADQLGPLPSTLVKTVDWLLVFSLFFLISFIMYATIRTESIRWLIPGQEQEHAE.

The signal sequence occupies residues 1-20 (MQLLCWWQILLWVLGLPARG). The Extracellular portion of the chain corresponds to 21 to 304 (LEEDSGHTWQ…GPLPSTLVKT (284 aa)). A compositionally biased stretch (basic and acidic residues) spans 86–95 (EDQRSTEAHD). The segment at 86-112 (EDQRSTEAHDGTCSAQGDEDPRCGGRE) is disordered. One can recognise a Thioredoxin domain in the interval 162–279 (ERNVTGLENF…LKIFIFNQTG (118 aa)). N-linked (GlcNAc...) asparagine glycans are attached at residues Asn170, Asn177, Asn189, and Asn276. The helical transmembrane segment at 305-325 (VDWLLVFSLFFLISFIMYATI) threads the bilayer. The Cytoplasmic segment spans residues 326-343 (RTESIRWLIPGQEQEHAE).

The protein localises to the cell projection. Its subcellular location is the cilium membrane. Acts as a positive regulator of ciliary hedgehog signaling. Required for cilia biogenesis. This Rattus norvegicus (Rat) protein is Thioredoxin domain-containing protein 15 (Txndc15).